The sequence spans 387 residues: S-adenosylmethionine synthase (387 aa).

Residue H16 coordinates ATP. D18 is a Mg(2+) binding site. A K(+)-binding site is contributed by E44. E57 and Q100 together coordinate L-methionine. Residues 100–110 form a flexible loop region; that stretch reads QSPDIAQGVDR. Residues 167–169, 232–233, D241, 247–248, A264, and K268 contribute to the ATP site; these read DAK, RF, and RK. Residue D241 coordinates L-methionine. K272 contributes to the L-methionine binding site.

It belongs to the AdoMet synthase family. Homotetramer; dimer of dimers. The cofactor is Mg(2+). It depends on K(+) as a cofactor.

It is found in the cytoplasm. The enzyme catalyses L-methionine + ATP + H2O = S-adenosyl-L-methionine + phosphate + diphosphate. It functions in the pathway amino-acid biosynthesis; S-adenosyl-L-methionine biosynthesis; S-adenosyl-L-methionine from L-methionine: step 1/1. In terms of biological role, catalyzes the formation of S-adenosylmethionine (AdoMet) from methionine and ATP. The overall synthetic reaction is composed of two sequential steps, AdoMet formation and the subsequent tripolyphosphate hydrolysis which occurs prior to release of AdoMet from the enzyme. This chain is S-adenosylmethionine synthase, found in Cupriavidus pinatubonensis (strain JMP 134 / LMG 1197) (Cupriavidus necator (strain JMP 134)).